Consider the following 244-residue polypeptide: tRNA pseudouridine synthase A (244 aa).

Catalysis depends on Asp-53, which acts as the Nucleophile. Tyr-111 contributes to the substrate binding site.

Belongs to the tRNA pseudouridine synthase TruA family. In terms of assembly, homodimer.

It catalyses the reaction uridine(38/39/40) in tRNA = pseudouridine(38/39/40) in tRNA. Functionally, formation of pseudouridine at positions 38, 39 and 40 in the anticodon stem and loop of transfer RNAs. The polypeptide is tRNA pseudouridine synthase A (Bacillus sp. (strain KSM-64)).